A 1892-amino-acid polypeptide reads, in one-letter code: Kinesin-like protein KIN-12E (1892 aa).

The interval 1-28 (MAGHGAGGRRASTSRAAARRVEAETNEN) is disordered. The Kinesin motor domain maps to 64 to 401 (NVQVLIRIRP…LKFAQRAKLI (338 aa)). ATP is bound at residue 145 to 152 (GQTGSGKT). Coiled coils occupy residues 406 to 438 (KVNE…QQNM), 486 to 526 (SLRR…TTVK), 1066 to 1139 (LFSN…LHEQ), 1303 to 1357 (KLLQ…LAEN), and 1396 to 1528 (ISET…SYQI). A compositionally biased stretch (basic and acidic residues) spans 1633–1649 (LHESNSDTGHTKFEKPS). The disordered stretch occupies residues 1633 to 1656 (LHESNSDTGHTKFEKPSGRTRGSG). Positions 1780 to 1841 (MDQRKADLLE…LVGSNQAIAE (62 aa)) form a coiled coil. Positions 1870–1892 (HARHEHSRLQAAKSSRTRRGSHQ) are disordered.

This sequence belongs to the TRAFAC class myosin-kinesin ATPase superfamily. Kinesin family. KIN-12 subfamily.

In Oryza sativa subsp. japonica (Rice), this protein is Kinesin-like protein KIN-12E.